We begin with the raw amino-acid sequence, 254 residues long: Small ribosomal subunit protein uS2 (254 aa).

Belongs to the universal ribosomal protein uS2 family.

The polypeptide is Small ribosomal subunit protein uS2 (Legionella pneumophila subsp. pneumophila (strain Philadelphia 1 / ATCC 33152 / DSM 7513)).